A 273-amino-acid polypeptide reads, in one-letter code: 4-hydroxy-tetrahydrodipicolinate reductase (273 aa).

NAD(+)-binding positions include 12–17 (GAGGRM) and glutamate 38. Position 39 (arginine 39) interacts with NADP(+). NAD(+) contacts are provided by residues 102-104 (GTT) and 126-129 (AANF). The Proton donor/acceptor role is filled by histidine 159. Histidine 160 contributes to the (S)-2,3,4,5-tetrahydrodipicolinate binding site. The Proton donor role is filled by lysine 163. 169 to 170 (GT) serves as a coordination point for (S)-2,3,4,5-tetrahydrodipicolinate.

This sequence belongs to the DapB family. Homotetramer.

The protein resides in the cytoplasm. The catalysed reaction is (S)-2,3,4,5-tetrahydrodipicolinate + NAD(+) + H2O = (2S,4S)-4-hydroxy-2,3,4,5-tetrahydrodipicolinate + NADH + H(+). It catalyses the reaction (S)-2,3,4,5-tetrahydrodipicolinate + NADP(+) + H2O = (2S,4S)-4-hydroxy-2,3,4,5-tetrahydrodipicolinate + NADPH + H(+). The protein operates within amino-acid biosynthesis; L-lysine biosynthesis via DAP pathway; (S)-tetrahydrodipicolinate from L-aspartate: step 4/4. Catalyzes the conversion of 4-hydroxy-tetrahydrodipicolinate (HTPA) to tetrahydrodipicolinate. This is 4-hydroxy-tetrahydrodipicolinate reductase from Yersinia enterocolitica serotype O:8 / biotype 1B (strain NCTC 13174 / 8081).